A 542-amino-acid chain; its full sequence is CTP synthase (542 aa).

Residues 1-265 (MTRYVFITGG…DREVLGHFGL (265 aa)) form an amidoligase domain region. CTP is bound at residue Ser13. Residue Ser13 participates in UTP binding. ATP is bound by residues 14–19 (SLGKGL) and Asp71. Positions 71 and 139 each coordinate Mg(2+). Residues 146-148 (DIE), 186-191 (KTKPTQ), and Lys222 contribute to the CTP site. UTP contacts are provided by residues 186 to 191 (KTKPTQ) and Lys222. A Glutamine amidotransferase type-1 domain is found at 291 to 541 (SIAIVGKYTG…VGAAIEQSRL (251 aa)). An L-glutamine-binding site is contributed by Gly353. Residue Cys380 is the Nucleophile; for glutamine hydrolysis of the active site. L-glutamine-binding positions include 381 to 384 (FGMQ), Glu404, and Arg469. Active-site residues include His514 and Glu516.

This sequence belongs to the CTP synthase family. As to quaternary structure, homotetramer.

It carries out the reaction UTP + L-glutamine + ATP + H2O = CTP + L-glutamate + ADP + phosphate + 2 H(+). It catalyses the reaction L-glutamine + H2O = L-glutamate + NH4(+). The catalysed reaction is UTP + NH4(+) + ATP = CTP + ADP + phosphate + 2 H(+). It participates in pyrimidine metabolism; CTP biosynthesis via de novo pathway; CTP from UDP: step 2/2. Allosterically activated by GTP, when glutamine is the substrate; GTP has no effect on the reaction when ammonia is the substrate. The allosteric effector GTP functions by stabilizing the protein conformation that binds the tetrahedral intermediate(s) formed during glutamine hydrolysis. Inhibited by the product CTP, via allosteric rather than competitive inhibition. Catalyzes the ATP-dependent amination of UTP to CTP with either L-glutamine or ammonia as the source of nitrogen. Regulates intracellular CTP levels through interactions with the four ribonucleotide triphosphates. This is CTP synthase from Methylobacterium radiotolerans (strain ATCC 27329 / DSM 1819 / JCM 2831 / NBRC 15690 / NCIMB 10815 / 0-1).